We begin with the raw amino-acid sequence, 876 residues long: Valine--tRNA ligase (876 aa).

Residues P44 to H54 carry the 'HIGH' region motif. Residues K520 to S524 carry the 'KMSKS' region motif. K523 provides a ligand contact to ATP. Residues L805–A876 adopt a coiled-coil conformation.

This sequence belongs to the class-I aminoacyl-tRNA synthetase family. ValS type 1 subfamily. In terms of assembly, monomer.

Its subcellular location is the cytoplasm. The catalysed reaction is tRNA(Val) + L-valine + ATP = L-valyl-tRNA(Val) + AMP + diphosphate. Catalyzes the attachment of valine to tRNA(Val). As ValRS can inadvertently accommodate and process structurally similar amino acids such as threonine, to avoid such errors, it has a 'posttransfer' editing activity that hydrolyzes mischarged Thr-tRNA(Val) in a tRNA-dependent manner. The sequence is that of Valine--tRNA ligase from Staphylococcus epidermidis (strain ATCC 35984 / DSM 28319 / BCRC 17069 / CCUG 31568 / BM 3577 / RP62A).